Reading from the N-terminus, the 225-residue chain is Small ribosomal subunit protein uS3 (225 aa).

Residues 38-106 (IRRFLQKKFK…PIGMNIIEVK (69 aa)) form the KH type-2 domain.

Belongs to the universal ribosomal protein uS3 family. As to quaternary structure, part of the 30S ribosomal subunit. Forms a tight complex with proteins S10 and S14.

In terms of biological role, binds the lower part of the 30S subunit head. Binds mRNA in the 70S ribosome, positioning it for translation. In Leptospira biflexa serovar Patoc (strain Patoc 1 / Ames), this protein is Small ribosomal subunit protein uS3.